The following is a 412-amino-acid chain: UPF0754 membrane protein MAE_37850 (412 aa).

Helical transmembrane passes span 3–23 and 387–407; these read LPTLWTWILPPIAGAIIGYFT and IVNLGGILGLLVGLMQTIILI.

Belongs to the UPF0754 family.

It localises to the cell inner membrane. The polypeptide is UPF0754 membrane protein MAE_37850 (Microcystis aeruginosa (strain NIES-843 / IAM M-2473)).